An 872-amino-acid chain; its full sequence is F-box protein pof6 (872 aa).

The region spanning 30–75 (FGCLTINIYLKIFTLISTPDLCNCRLVCRKFQQLCDYNSIYVKKLL) is the F-box domain. Residues 101–122 (MSSNTSKGFHLQSSDKKYADSD) are disordered. Residues 113 to 122 (SSDKKYADSD) are compositionally biased toward basic and acidic residues.

In terms of assembly, interacts with skp1. Forms a complex with pof6 and skp1.

It localises to the cytoplasm. Its subcellular location is the nucleus. Functionally, together with skp1, essential for septum processing and cell separation. The sequence is that of F-box protein pof6 (pof6) from Schizosaccharomyces pombe (strain 972 / ATCC 24843) (Fission yeast).